The following is a 146-amino-acid chain: Hemoglobin subunit beta (146 aa).

N-acetylvaline is present on Val-1. The Globin domain occupies 2-146; the sequence is HLSAEEKAAV…VANALAHKYH (145 aa). Thr-12 is subject to Phosphothreonine. Ser-44 is subject to Phosphoserine. N6-acetyllysine is present on Lys-59. His-63 contributes to the heme b binding site. At Lys-82 the chain carries N6-acetyllysine. Heme b is bound at residue His-92. Cys-93 carries the S-nitrosocysteine modification. The residue at position 144 (Lys-144) is an N6-acetyllysine.

This sequence belongs to the globin family. As to quaternary structure, heterotetramer of two alpha chains and two beta chains. As to expression, red blood cells.

Functionally, involved in oxygen transport from the lung to the various peripheral tissues. The chain is Hemoglobin subunit beta (HBB) from Ctenodactylus gundi (Northern gundi).